Consider the following 124-residue polypeptide: Large ribosomal subunit protein bL20c (124 aa).

Belongs to the bacterial ribosomal protein bL20 family.

The protein resides in the plastid. It localises to the chloroplast. In terms of biological role, binds directly to 23S ribosomal RNA and is necessary for the in vitro assembly process of the 50S ribosomal subunit. It is not involved in the protein synthesizing functions of that subunit. The sequence is that of Large ribosomal subunit protein bL20c from Stigeoclonium helveticum (Green alga).